Reading from the N-terminus, the 470-residue chain is MQTKSAGFNAGVQDYRLTYYTPDYTPKDTDLLACFRMTPQPGVPPEECAAAVAAESSTGTWTTVWTDGLTDLDRYKGRCYNVEPVPGEDNQYFCFVAYPLDLFEEGSVTNVLTSLVGNVFGFKALRALRLEDIRFPVALIKTYQGPPHGITVERDLLNKYGRPLLGCTIKPKLGLSAKNYGRAVYECLRGGLDFTKDDENINSQPFMRWRDRFLFVQEAIEKSQAETNEVKGHYLNVTAGTCEEMLKRAEFAKEIGTPIIMHDFLTGGFTANTTLAKWCRDNGVLLHIHRAMHAVIDRQKNHGIHFRVLAKCLRLSGGDHLHSGTVVGKLEGDRAATLGFVDLMREDYVEEDRSRGVFFTQDYASLPGTMPVASGGIHVWHMPALVEIFGDDSCLQFGGGTLGHPWGNAPGATANRVALEACVQARNEGRSLAREGNDVLREAGKWSPELAAALDLWKEIKFEFDTVDTL.

Asparagine 118 and threonine 168 together coordinate substrate. Lysine 170 acts as the Proton acceptor in catalysis. Residue lysine 172 participates in substrate binding. Residues lysine 196, aspartate 198, and glutamate 199 each contribute to the Mg(2+) site. Lysine 196 carries the post-translational modification N6-carboxylysine. The active-site Proton acceptor is the histidine 289. Arginine 290, histidine 322, and serine 374 together coordinate substrate. Residues 459 to 465 carry the Interacts with RbcX2 motif; that stretch reads EIKFEFD.

This sequence belongs to the RuBisCO large chain family. Type I subfamily. In terms of assembly, heterohexadecamer of 8 large chains and 8 small chains; disulfide-linked. The disulfide link is formed within the large subunit homodimers. Requires Mg(2+) as cofactor. The disulfide bond which can form in the large chain dimeric partners within the hexadecamer appears to be associated with oxidative stress and protein turnover.

It localises to the carboxysome. The enzyme catalyses 2 (2R)-3-phosphoglycerate + 2 H(+) = D-ribulose 1,5-bisphosphate + CO2 + H2O. It carries out the reaction D-ribulose 1,5-bisphosphate + O2 = 2-phosphoglycolate + (2R)-3-phosphoglycerate + 2 H(+). In terms of biological role, ruBisCO catalyzes two reactions: the carboxylation of D-ribulose 1,5-bisphosphate, the primary event in carbon dioxide fixation, as well as the oxidative fragmentation of the pentose substrate in the photorespiration process. Both reactions occur simultaneously and in competition at the same active site. This is Ribulose bisphosphate carboxylase large chain from Picosynechococcus sp. (strain ATCC 27264 / PCC 7002 / PR-6) (Agmenellum quadruplicatum).